A 224-amino-acid chain; its full sequence is Lipoprotein-releasing system ATP-binding protein LolD (224 aa).

An ABC transporter domain is found at Leu6–Ile224. Gly43 to Thr50 provides a ligand contact to ATP.

This sequence belongs to the ABC transporter superfamily. Lipoprotein translocase (TC 3.A.1.125) family. The complex is composed of two ATP-binding proteins (LolD) and two transmembrane proteins (LolC and LolE).

The protein localises to the cell inner membrane. In terms of biological role, part of the ABC transporter complex LolCDE involved in the translocation of mature outer membrane-directed lipoproteins, from the inner membrane to the periplasmic chaperone, LolA. Responsible for the formation of the LolA-lipoprotein complex in an ATP-dependent manner. In Neorickettsia sennetsu (strain ATCC VR-367 / Miyayama) (Ehrlichia sennetsu), this protein is Lipoprotein-releasing system ATP-binding protein LolD.